We begin with the raw amino-acid sequence, 314 residues long: Methionyl-tRNA formyltransferase (314 aa).

(6S)-5,6,7,8-tetrahydrofolate is bound at residue 110–113; sequence SLLP.

It belongs to the Fmt family.

It carries out the reaction L-methionyl-tRNA(fMet) + (6R)-10-formyltetrahydrofolate = N-formyl-L-methionyl-tRNA(fMet) + (6S)-5,6,7,8-tetrahydrofolate + H(+). In terms of biological role, attaches a formyl group to the free amino group of methionyl-tRNA(fMet). The formyl group appears to play a dual role in the initiator identity of N-formylmethionyl-tRNA by promoting its recognition by IF2 and preventing the misappropriation of this tRNA by the elongation apparatus. The sequence is that of Methionyl-tRNA formyltransferase from Lactobacillus johnsonii (strain CNCM I-12250 / La1 / NCC 533).